The chain runs to 500 residues: Glycerol kinase (500 aa).

Threonine 15 lines the ADP pocket. 3 residues coordinate ATP: threonine 15, threonine 16, and serine 17. Threonine 15 contributes to the sn-glycerol 3-phosphate binding site. Residue arginine 19 coordinates ADP. Positions 85, 86, 137, and 245 each coordinate sn-glycerol 3-phosphate. Glycerol is bound by residues arginine 85, glutamate 86, tyrosine 137, aspartate 245, and glutamine 246. ADP-binding residues include threonine 267 and glycine 310. 4 residues coordinate ATP: threonine 267, glycine 310, glutamine 314, and glycine 411. ADP contacts are provided by glycine 411 and asparagine 415.

It belongs to the FGGY kinase family.

The enzyme catalyses glycerol + ATP = sn-glycerol 3-phosphate + ADP + H(+). The protein operates within polyol metabolism; glycerol degradation via glycerol kinase pathway; sn-glycerol 3-phosphate from glycerol: step 1/1. Inhibited by fructose 1,6-bisphosphate (FBP). Key enzyme in the regulation of glycerol uptake and metabolism. Catalyzes the phosphorylation of glycerol to yield sn-glycerol 3-phosphate. This Aeromonas hydrophila subsp. hydrophila (strain ATCC 7966 / DSM 30187 / BCRC 13018 / CCUG 14551 / JCM 1027 / KCTC 2358 / NCIMB 9240 / NCTC 8049) protein is Glycerol kinase.